Reading from the N-terminus, the 290-residue chain is Microtubule-associated protein P320 (290 aa).

8 repeats span residues 1–38 (SEYR…PIDP), 39–76 (SEYR…PIDP), 77–114 (SEYR…PIDP), 115–152 (SEYR…PIDP), 153–190 (SEYR…PIDP), 191–228 (SEYR…PIDP), 229–266 (SEYR…PIDP), and 267–290 (SEYR…DESH). Positions 251 to 290 (SHFLTTTHEAYKPIDPSEYRQKRTVGEEVTTDMRHVDESH) are disordered. The span at 259 to 290 (EAYKPIDPSEYRQKRTVGEEVTTDMRHVDESH) shows a compositional bias: basic and acidic residues.

The protein localises to the cytoplasm. Its subcellular location is the cytoskeleton. In Trypanosoma brucei brucei, this protein is Microtubule-associated protein P320.